The chain runs to 108 residues: Thioredoxin C-2 (108 aa).

The region spanning 2 to 108 is the Thioredoxin domain; that stretch reads SATIVNTTDE…KLAAFIDQNI (107 aa). The cysteines at positions 33 and 36 are disulfide-linked.

It belongs to the thioredoxin family.

Its function is as follows. Participates in various redox reactions through the reversible oxidation of its active center dithiol to a disulfide and catalyzes dithiol-disulfide exchange reactions. The polypeptide is Thioredoxin C-2 (Corynebacterium nephridii).